A 216-amino-acid polypeptide reads, in one-letter code: UDP-N-acetylbacillosamine N-acetyltransferase (216 aa).

His137 (proton acceptor) is an active-site residue. His146 serves as a coordination point for acetyl-CoA.

It belongs to the transferase hexapeptide repeat family. In terms of assembly, forms oligomers.

The catalysed reaction is UDP-N-acetylbacillosamine + acetyl-CoA = UDP-N,N'-diacetylbacillosamine + CoA + H(+). Its function is as follows. Catalyzes the conversion of UDP-2,4,6-trideoxy-2-acetamido-4-amino glucose to UDP-2,4,6-trideoxy-2,4-diacetamido glucose, commonly known as UDP-N,N'-diacetylbacillosamine (UDP-diNAcBac). This is UDP-N-acetylbacillosamine N-acetyltransferase from Bacillus subtilis (strain 168).